The primary structure comprises 178 residues: MSRIGKQPIAIPAGVEVKLEGNLLKFKKGNLAKELDTKANVNVEIKDNNILFSPKGEDRQSRAYWGTYRALAYNIVVGLTQGFSKTLEINGVGYKAALKGKVLELSLGFSHPINYDIPGGIEIVVDKNTIAVKGSDKQVVGQVAAQIREFRPPEPYKGKGVKYSDERIIRKAGKTSKK.

This sequence belongs to the universal ribosomal protein uL6 family. In terms of assembly, part of the 50S ribosomal subunit.

This protein binds to the 23S rRNA, and is important in its secondary structure. It is located near the subunit interface in the base of the L7/L12 stalk, and near the tRNA binding site of the peptidyltransferase center. This Campylobacter jejuni subsp. doylei (strain ATCC BAA-1458 / RM4099 / 269.97) protein is Large ribosomal subunit protein uL6.